A 280-amino-acid chain; its full sequence is Large ribosomal subunit protein uL2 (280 aa).

A disordered region spans residues 229-280 (DHPHGGGEGKAPIGHPSPLTPWGKPTLGYKTRKKRKPSDRFIIQRANDKKEK).

It belongs to the universal ribosomal protein uL2 family. As to quaternary structure, part of the 50S ribosomal subunit. Forms a bridge to the 30S subunit in the 70S ribosome.

Functionally, one of the primary rRNA binding proteins. Required for association of the 30S and 50S subunits to form the 70S ribosome, for tRNA binding and peptide bond formation. It has been suggested to have peptidyltransferase activity; this is somewhat controversial. Makes several contacts with the 16S rRNA in the 70S ribosome. The sequence is that of Large ribosomal subunit protein uL2 from Dictyoglomus turgidum (strain DSM 6724 / Z-1310).